We begin with the raw amino-acid sequence, 448 residues long: Beclin-1 (448 aa).

Met1 carries the post-translational modification N-acetylmethionine. Residues Ser14 and Ser29 each carry the phosphoserine modification. A disordered region spans residues 47–66; it reads TTAQAKPGETQEEEANSGEE. Ser88, Ser91, and Ser94 each carry phosphoserine; by AMPK. The BH3 signature appears at 106–125; that stretch reads TMENLSRRLKVTGDLFDIMS. The interval 110–157 is interaction with BCL2 and BCL2L1 isoform Bcl-X(L); the sequence is LSRRLKVTGDLFDIMSGQTDVDHPLCEECTDTLLDQLDTQLNVTENEC. A Phosphothreonine; by DAPK1 modification is found at Thr117. The stretch at 140 to 268 forms a coiled coil; sequence DTLLDQLDTQ…LDKLKKTNVF (129 aa). An evolutionary conserved domain (ECD) region spans residues 243–448; the sequence is DELKSVENQV…AWVSSQFYNK (206 aa). Glycyl lysine isopeptide (Lys-Gly) (interchain with G-Cter in ubiquitin) cross-links involve residues Lys400 and Lys435. The interval 423–448 is required for membrane-association; the sequence is WTKALKFMLTNLKWGLAWVSSQFYNK.

Belongs to the beclin family. A homodimeric form is proposed to exist; this metastable form readily transits to ATG14- or UVRAG-containing complexes with BECN1:UVRAG being more stable than BECN1:ATG14. Component of the PI3K (PI3KC3/PI3K-III/class III phosphatidylinositol 3-kinase) complex whose core is composed of the catalytic subunit PIK3C3, the regulatory subunit PIK3R4 and BECN1, and associates with additional regulatory/auxiliary subunits to form alternative complex forms. Accepted alternative complex forms containing a fourth regulatory subunit in a mutually exclusive manner are PI3K complex I (PI3KC3-C1) containing ATG14, and PI3K complex II (PI3KC3-C2) containing UVRAG. PI3KC3-C1 displays a V-shaped architecture with PIK3R4 serving as a bridge between PIK3C3 and the ATG14:BECN1 subcomplex. Both, PI3KC3-C1 and PI3KC3-C2, can associate with further regulatory subunits, such as RUBCN, SH3GLB1/Bif-1 and AMBRA1. PI3KC3-C1 probably associates with PIK3CB. Forms a complex with PPP2CA and AMBRA1; AMBRA1 and BECN1 components of the complex regulate MYC stability via different pathways. Component of the complex, at least composed of LRPPRC, BECN1 and BCL2; the interactions prevent BECN1 from forming an autophagy-inducing complex with PIK3C3. Interacts with AMBRA1, GOPC, GRID2 and PIK3CB. Interacts with BCL2 and BCL2L1 isoform Bcl-X(L); the interaction inhibits BECN1 function in promoting autophagy by interfering with the formation of the PI3K complex. Interacts with cytosolic HMGB1; inhibits the interaction of BECN1 and BCL2 leading to promotion of autophagy. Interacts with USP10, USP13, VMP1, DAPK1. Interacts with the poly-Gln domain of ATXN3; the interaction causes deubiquitination at Lys-400 and stabilizes BECN1. Interacts with SLAMF1. Interacts with TRIM5; the interaction causes activation of BECN1 by causing its dissociation from its inhibitors BCL2 and TAB2. Interacts with active ULK1 (phosphorylated on 'Ser-317') and MEFV simultaneously. Interacts with TRIM50. Interacts with TRIM16. Interacts with WDR81 and WDR91; negatively regulates the PI3 kinase/PI3K activity associated with endosomal membranes. Interacts with LAPTM4B; competes with EGFR for LAPTM4B binding; regulates EGFR activity. Interacts with ATG14; this interaction is increased in the absence of TMEM39A. Interacts with WASHC1; preventing interaction with AMBRA1 and the DCX(AMBRA1) complex and subsequent ubiquitination. Interacts with TRIM17. Interacts with BCL2L10/BCL-B (via BH1 domain). Interacts with SH3BGRL. Interacts with Irgm1; enhancing BECN1-interacting partners and influencing the composition of the BECN1 complex. Interacts with ARMC3. Interacts with LRPPRC. In terms of assembly, (Microbial infection) Interacts with murine gammaherpesvirus 68 M11; the viral protein binds BECN1 with higher affinity than cellular BCL2. In terms of processing, phosphorylation at Thr-117 by DAPK1 reduces its interaction with BCL2 and BCL2L1 and promotes induction of autophagy. In response to autophagic stimuli, phosphorylated at serine residues by AMPK in an ATG14-dependent manner, and this phosphorylation is critical for maximally efficient autophagy. Post-translationally, polyubiquitinated by NEDD4, both with 'Lys-11'- and 'Lys-63'-linkages. 'Lys-11'-linked polyubiquitination leads to degradation and is enhanced when the stabilizing interaction partner VPS34 is depleted. Deubiquitinated by USP10 and USP13, leading to stabilize the PIK3C3/VPS34-containing complexes. Polyubiquitinated at Lys-400 with 'Lys-48'-linkages. 'Lys-48'-linked poyubiquitination of Lys-400 leads to degradation. Deubiquitinated by ATXN3, leading to stabilization. Ubiquitinated at Lys-435 via 'Lys-63'-linkage by the DCX(AMBRA1) complex, thereby increasing the association between BECN1 and PIK3C3 to promote PIK3C3 activity. 'Lys-48'-linked ubiquitination by RNF216 leads to proteasomal degradation and autophagy inhibition. Proteolytically processed by caspases including CASP8 and CASP3; the C-terminal fragments lack autophagy-inducing capacity and are proposed to induce apoptosis. Thus the cleavage is proposed to be an determinant to switch from autophagy to apoptosis pathways affecting cellular homeostasis including viral infections and survival of tumor cells.

It is found in the cytoplasm. The protein resides in the golgi apparatus. Its subcellular location is the trans-Golgi network membrane. The protein localises to the endosome membrane. It localises to the endoplasmic reticulum membrane. It is found in the mitochondrion membrane. The protein resides in the endosome. Its subcellular location is the cytoplasmic vesicle. The protein localises to the autophagosome. It localises to the mitochondrion. It is found in the nucleus. In terms of biological role, plays a central role in autophagy. Acts as a core subunit of different PI3K complex forms that mediate formation of phosphatidylinositol 3-phosphate and are believed to play a role in multiple membrane trafficking pathways: PI3KC3-C1 is involved in initiation of autophagosomes and PI3KC3-C2 in maturation of autophagosomes and endocytosis. Involved in regulation of degradative endocytic trafficking and required for the abscission step in cytokinesis, probably in the context of PI3KC3-C2. Essential for the formation of PI3KC3-C2 but not PI3KC3-C1 PI3K complex forms. Involved in endocytosis including endosome formation in neuronal cells. May play a role in antiviral host defense. Functionally, beclin-1-C 35 kDa localized to mitochondria can promote apoptosis; it induces the mitochondrial translocation of BAX and the release of proapoptotic factors. This is Beclin-1 (Becn1) from Mus musculus (Mouse).